Reading from the N-terminus, the 137-residue chain is Small ribosomal subunit protein uS12 (137 aa).

The segment at 1-57 (MPTINQLVRKPRKSKTKQSDSPVLNRGFNSKKKQFTNLNSPQKRGVCTRVGTMTPRK) is disordered. Aspartate 102 is modified (3-methylthioaspartic acid). Residues 118 to 137 (SGVDGRRQGRSLYGTKKPKN) are disordered.

This sequence belongs to the universal ribosomal protein uS12 family. In terms of assembly, part of the 30S ribosomal subunit. Contacts proteins S8 and S17. May interact with IF1 in the 30S initiation complex.

In terms of biological role, with S4 and S5 plays an important role in translational accuracy. Functionally, interacts with and stabilizes bases of the 16S rRNA that are involved in tRNA selection in the A site and with the mRNA backbone. Located at the interface of the 30S and 50S subunits, it traverses the body of the 30S subunit contacting proteins on the other side and probably holding the rRNA structure together. The combined cluster of proteins S8, S12 and S17 appears to hold together the shoulder and platform of the 30S subunit. The protein is Small ribosomal subunit protein uS12 of Staphylococcus epidermidis (strain ATCC 12228 / FDA PCI 1200).